The chain runs to 956 residues: Protein translocase subunit SecA (956 aa).

Residues Gln87, 105–109, and Asp524 each bind ATP; that span reads GEGKT. Cys940, Cys942, Cys951, and His952 together coordinate Zn(2+).

It belongs to the SecA family. In terms of assembly, monomer and homodimer. Part of the essential Sec protein translocation apparatus which comprises SecA, SecYEG and auxiliary proteins SecDF-YajC and YidC. Requires Zn(2+) as cofactor.

Its subcellular location is the cell inner membrane. It localises to the cytoplasm. The catalysed reaction is ATP + H2O + cellular proteinSide 1 = ADP + phosphate + cellular proteinSide 2.. In terms of biological role, part of the Sec protein translocase complex. Interacts with the SecYEG preprotein conducting channel. Has a central role in coupling the hydrolysis of ATP to the transfer of proteins into and across the cell membrane, serving both as a receptor for the preprotein-SecB complex and as an ATP-driven molecular motor driving the stepwise translocation of polypeptide chains across the membrane. This chain is Protein translocase subunit SecA, found in Beijerinckia indica subsp. indica (strain ATCC 9039 / DSM 1715 / NCIMB 8712).